Consider the following 856-residue polypeptide: 3-hydroxy-3-methylglutaryl-coenzyme A reductase (856 aa).

The next 4 helical transmembrane spans lie at 12–32 (FCAS…VCML), 89–109 (ILGI…SSVI), 123–143 (LFFF…QFAL), and 190–210 (VLCC…MTFY). Residue N326 is glycosylated (N-linked (GlcNAc...) asparagine). A helical membrane pass occupies residues 344-364 (SADHIVILILLLALAVKFVFF). The linker stretch occupies residues 365 to 443 (ETRDELTTTR…CEVMALVTSG (79 aa)). A glycan (N-linked (GlcNAc...) asparagine) is linked at N412. The segment at 443 to 771 (GHIAGYQLEK…SCTMPSIEIG (329 aa)) is catalytic. Residues E528 and K659 each act as charge relay system in the active site. An N-linked (GlcNAc...) asparagine glycan is attached at N700. D735 (charge relay system) is an active-site residue. The Proton donor role is filled by H834. A disordered region spans residues 836–856 (RHNRSSVSTSGSEPSTPACKS). N-linked (GlcNAc...) asparagine glycosylation occurs at N838. Over residues 840–856 (SSVSTSGSEPSTPACKS) the composition is skewed to low complexity.

The protein belongs to the HMG-CoA reductase family.

The protein resides in the endoplasmic reticulum membrane. The enzyme catalyses (R)-mevalonate + 2 NADP(+) + CoA = (3S)-3-hydroxy-3-methylglutaryl-CoA + 2 NADPH + 2 H(+). Its pathway is metabolic intermediate biosynthesis; (R)-mevalonate biosynthesis; (R)-mevalonate from acetyl-CoA: step 3/3. With respect to regulation, the activity of HMG-CoA-reductase is suppressed by exogenous mevalonate. In terms of biological role, synthesis of mevalonate for the production of non-sterol isoprenoids, which are essential for growth differentiation. In Blattella germanica (German cockroach), this protein is 3-hydroxy-3-methylglutaryl-coenzyme A reductase.